Reading from the N-terminus, the 188-residue chain is Abscisic acid receptor PYL8 (188 aa).

Residues 25–176 are START-like; sequence HELVDNQCSS…NLKSLADISE (152 aa). Cysteines 32 and 157 form a disulfide. Lysine 61 serves as a coordination point for abscisate. At threonine 77 the chain carries Phosphothreonine; by CARK1. The Gate loop signature appears at 85–89; it reads SGLPA. Residues 89–94, 116–122, and glutamate 141 contribute to the abscisate site; these read ATRSTE and RLKNYSS. Residues 115–117 carry the Latch loop motif; it reads HRL.

This sequence belongs to the PYR/PYL/RCAR abscisic acid intracellular receptor family. Monomer. Homodimer. Binds ABA on one subunit only. interacts with ABI1 and HAB1, and possibly with other PP2Cs. Binds to CARs protein in an ABA-independent manner, both at the plasma membrane and in the nucleus. Interacts directly with CAR1 and CAR4. Interacts with MYB44, MYB73 and MYB77 in an ABA-independent manner. Interacts with DDA1. Interacts with CARK1 in the cytosol. Binds to ABI1 when phosphorylated by CARK1. Interacts with AIP1 in the nucleus. Post-translationally, phosphorylated by CARK1 especially in response to abscisic acid (ABA); this phosphorylation promotes its stability and inhibitory ability to ABI1. In terms of processing, ubiquitinated in DDA1- and CDD complex-dependent manner. Ubiquitination leads to its subsequent proteasomal degradation.

It is found in the cytoplasm. The protein localises to the cytosol. It localises to the nucleus. The protein resides in the cell membrane. Its function is as follows. Receptor for abscisic acid (ABA) required for ABA-mediated responses such as stomatal closure and germination inhibition. Inhibits the activity of group-A protein phosphatases type 2C (PP2Cs) in an ABA-independent manner but more efficiently when activated by ABA. Confers enhanced sensitivity to ABA. Can be activated by both (-)-ABA and (+)-ABA. Mediates crosstalk between ABA and auxin signaling to regulate lateral root growth. Required for lateral root growth suppression by ABA. In response to auxin, promotes lateral root growth by enhancing MYB77-dependent transcription of the auxin-responsive gene IAA19. Enhances the abilities of MYB44 and MYB73 to activate IAA19 gene. The protein is Abscisic acid receptor PYL8 of Arabidopsis thaliana (Mouse-ear cress).